Here is a 97-residue protein sequence, read N- to C-terminus: MKLRPLHDRVVIRRSEEESKTAGGIVLPGSAAEKPNRGEIVAVGTGRVLDNGEVRALAVKVGDKVVFGPYSGSNTVKVDGEDLLVMAENEILAVIEG.

It belongs to the GroES chaperonin family. In terms of assembly, heptamer of 7 subunits arranged in a ring. Interacts with the chaperonin GroEL.

The protein resides in the cytoplasm. Functionally, together with the chaperonin GroEL, plays an essential role in assisting protein folding. The GroEL-GroES system forms a nano-cage that allows encapsulation of the non-native substrate proteins and provides a physical environment optimized to promote and accelerate protein folding. GroES binds to the apical surface of the GroEL ring, thereby capping the opening of the GroEL channel. This Pseudomonas fluorescens (strain ATCC BAA-477 / NRRL B-23932 / Pf-5) protein is Co-chaperonin GroES.